Consider the following 210-residue polypeptide: Protein MSO1 (210 aa).

Met1 carries the N-acetylmethionine modification. Residue Met2 is modified to N-acetylserine. The disordered stretch occupies residues 88–210; sequence KHDMKKQNSR…LKRRNNDYGF (123 aa). Ser102 is subject to Phosphoserine. Over residues 117–141 the composition is skewed to polar residues; that stretch reads TPSSNGNTPEYTPASKSFQDIYNNH. 2 stretches are compositionally biased toward low complexity: residues 142–161 and 172–183; these read TSSS…RPSA and SKTSNSFNTSST.

In terms of assembly, interacts physically with SEC1.

Involved in secretion. Component of the secretory vesicle docking complex. The sequence is that of Protein MSO1 (MSO1) from Saccharomyces cerevisiae (strain ATCC 204508 / S288c) (Baker's yeast).